Reading from the N-terminus, the 434-residue chain is MPETDEEKVRRYTECLMNGIDPKRALKRLYDLNVSPEVFKSADTYQCVKRYESSPELAKYAKRVRDKLLGGRKREKGGGEDDADIEHTALKKAKKEEVNLDEEFAEAMKSGVSAQASSAPRATVDYSKYKVVKRVEVKVEPKPEPVDVHEQQASSSSMSYQREHQKDYAPVVPTCKPSGQPKKAIPQSKSLHADENMFKPRKERQKVFAGRRKRVGEGVSTLVSLCQTVLMSHIDMIDHVGIVPFDLLKPVLDHASTDQLRHILDVNPMLVEDADEMFHEMVSREFPKYANREKSGWTWREMYDRLVEKKQKKENDKLEMLTSRIGKSNSAQSQGRQTMVIDMAHTRVRSKSFFNTVKDSQVKMSATPSALQLSQARKNVKIEGKAQLRTITPRGGGVPSTSRSRSNNNNNMNNGLVVKKTAPLMAKCKKMLKR.

Positions 142-161 are disordered; sequence KPEPVDVHEQQASSSSMSYQ. A compositionally biased stretch (polar residues) spans 151–160; it reads QQASSSSMSY. Positions 221 to 230 are BC box; it reads TLVSLCQTVL. The F-box domain maps to 237–281; the sequence is IDHVGIVPFDLLKPVLDHASTDQLRHILDVNPMLVEDADEMFHEM. A disordered region spans residues 391–415; the sequence is ITPRGGGVPSTSRSRSNNNNNMNNG.

Heterotrimer of an A, B and C subunit.

The protein resides in the nucleus. Functionally, SIII, also known as elongin, is a general transcription elongation factor that increases the RNA polymerase II transcription elongation past template-encoded arresting sites. Subunit A is transcriptionally active and its transcription activity is strongly enhanced by binding to the dimeric complex of the SIII regulatory subunits B and C (elongin BC complex). This Caenorhabditis elegans protein is Transcription elongation factor B polypeptide 3.